A 288-amino-acid chain; its full sequence is MLIFAPAKINLTLDILGKRPDGYHELWSVMQAITLGDLVEIEPAEGINLRVVGADLPVDSTNIAFKAVQALRAATGKAIGASITIRKKIPLEAGLAGGSADGAAVLYGLNKLYNLNLSQEELLEIGAKISADIPFCLTGGTALVQGIGEKVKKLPPLKKGYFVIYKPPFGISTKEAYLRLAGKDLTKEHPDREKILKALGKENLEDLGKFLKNLLEISALEINPEIYKYKNELLNLKPLGVLMSGSGSALFALTENLKKAKEIYYQLTLPGQKFIVRPYAAGPTCLKL.

Residue Lys8 is part of the active site. Pro90–Ala100 contacts ATP. Asp132 is an active-site residue.

It belongs to the GHMP kinase family. IspE subfamily.

It catalyses the reaction 4-CDP-2-C-methyl-D-erythritol + ATP = 4-CDP-2-C-methyl-D-erythritol 2-phosphate + ADP + H(+). It participates in isoprenoid biosynthesis; isopentenyl diphosphate biosynthesis via DXP pathway; isopentenyl diphosphate from 1-deoxy-D-xylulose 5-phosphate: step 3/6. Catalyzes the phosphorylation of the position 2 hydroxy group of 4-diphosphocytidyl-2C-methyl-D-erythritol. In Carboxydothermus hydrogenoformans (strain ATCC BAA-161 / DSM 6008 / Z-2901), this protein is 4-diphosphocytidyl-2-C-methyl-D-erythritol kinase.